An 866-amino-acid polypeptide reads, in one-letter code: Coiled-coil domain-containing protein 178 (866 aa).

The interval 1–21 (MPENEKEPAQPTTNEDALDTG) is disordered. Coiled-coil stretches lie at residues 157–266 (ELKK…DYMA), 292–403 (EVME…DQYC), 439–480 (KDLT…EEEV), 514–539 (KTEE…LKKL), 570–631 (RRQV…LLKK), and 665–705 (EKCI…REHV).

This Mus musculus (Mouse) protein is Coiled-coil domain-containing protein 178 (Ccdc178).